We begin with the raw amino-acid sequence, 510 residues long: MFPISVGWIAFAGVLLTLIALNYFIVKYYSDKHESGKITTIISVIGLTLTLLCVMLIPVDILNVSTMSHSDGTQISPYSISQRTEGVKMLYYILYGSILGVSLILVPFAYFYHEEYDENIPTCSRVYAGCKFTIFFILFTIILLVVGAFVRPGSKPIDDQNVKDWINDEVLNQNAIESSVLFAISCLTVLGFLVFAVYTSYGLSAFPIGLIKGKKRTDDDKSDINKDLWKAKEKSSFYSSKYASGKSLSEKEQSTLSLLRGKERALSKRSERLDNSNKGFRKILVIFRPFAFIFGFIFILVSLLIIISIVLSLVDKISSSVCGSACGFLSTYPQLKNPFDIILTKLAPYFPLDYIIIGGLIFFIYSCTLSGITRIGIRFLWINMFEFGYRKTFPQGLLLASVLLMLSNLCLNMQIVNLAPRYVMYGAQVYLNGTSVIPCTINAPTDLCIMSEIGLLTSRIQLGISFFGIVFYYGTWVIVATFILGLAVSIFKRRPSAALSYSGDSDEEEI.

A helical transmembrane segment spans residues methionine 1–leucine 21. The Extracellular portion of the chain corresponds to asparagine 22 to threonine 40. The helical transmembrane segment at isoleucine 41–isoleucine 61 threads the bilayer. Residues leucine 62–lysine 88 lie on the Cytoplasmic side of the membrane. The chain crosses the membrane as a helical span at residues methionine 89–alanine 109. Residues tyrosine 110–glycine 129 lie on the Extracellular side of the membrane. A helical membrane pass occupies residues cysteine 130–valine 150. Residues arginine 151 to serine 178 are Cytoplasmic-facing. The helical transmembrane segment at serine 179 to threonine 199 threads the bilayer. Residues serine 200 to proline 289 lie on the Extracellular side of the membrane. Residues phenylalanine 290–valine 310 form a helical membrane-spanning segment. At leucine 311–lysine 345 the chain is on the cytoplasmic side. The chain crosses the membrane as a helical span at residues leucine 346 to serine 366. The Extracellular segment spans residues cysteine 367–glutamine 395. A helical membrane pass occupies residues glycine 396 to valine 416. Over asparagine 417–serine 465 the chain is Cytoplasmic. A helical transmembrane segment spans residues phenylalanine 466 to leucine 486. Residues alanine 487–isoleucine 510 are Extracellular-facing.

It belongs to the LIMR family. LMBRD1 subfamily.

The protein resides in the lysosome membrane. Functionally, probable lysosomal cobalamin transporter. Required to export cobalamin from lysosomes allowing its conversion to cofactors. In Dictyostelium discoideum (Social amoeba), this protein is Probable lysosomal cobalamin transporter (lmbrd1).